The chain runs to 575 residues: DNA mismatch repair protein MutL (575 aa).

It belongs to the DNA mismatch repair MutL/HexB family.

Functionally, this protein is involved in the repair of mismatches in DNA. It is required for dam-dependent methyl-directed DNA mismatch repair. May act as a 'molecular matchmaker', a protein that promotes the formation of a stable complex between two or more DNA-binding proteins in an ATP-dependent manner without itself being part of a final effector complex. The protein is DNA mismatch repair protein MutL of Dictyoglomus thermophilum (strain ATCC 35947 / DSM 3960 / H-6-12).